The chain runs to 485 residues: GTPase Der (485 aa).

EngA-type G domains are found at residues 3–167 (PTIA…PEPE) and 176–349 (PVFA…NAAM). Residues 9 to 16 (GRPNVGKS), 56 to 60 (DTGGF), 119 to 122 (NKGE), 182 to 189 (GRPNVGKS), 229 to 233 (DTAGV), and 294 to 297 (NKWD) contribute to the GTP site. In terms of domain architecture, KH-like spans 350–434 (IKMPTPKITR…PLRIQYNVSE (85 aa)). A disordered region spans residues 435–485 (NPYENADDKPKKKPLRRVSLSNRIEKREGRKEEKNRFKKKTKVSVKKQFSK). The span at 457–469 (RIEKREGRKEEKN) shows a compositional bias: basic and acidic residues. Residues 470–485 (RFKKKTKVSVKKQFSK) are compositionally biased toward basic residues.

The protein belongs to the TRAFAC class TrmE-Era-EngA-EngB-Septin-like GTPase superfamily. EngA (Der) GTPase family. As to quaternary structure, associates with the 50S ribosomal subunit.

Functionally, GTPase that plays an essential role in the late steps of ribosome biogenesis. The polypeptide is GTPase Der (Neisseria meningitidis serogroup A / serotype 4A (strain DSM 15465 / Z2491)).